Here is a 556-residue protein sequence, read N- to C-terminus: 2-succinyl-5-enolpyruvyl-6-hydroxy-3-cyclohexene-1-carboxylate synthase (556 aa).

This sequence belongs to the TPP enzyme family. MenD subfamily. As to quaternary structure, homodimer. Requires Mg(2+) as cofactor. It depends on Mn(2+) as a cofactor. Thiamine diphosphate serves as cofactor.

The catalysed reaction is isochorismate + 2-oxoglutarate + H(+) = 5-enolpyruvoyl-6-hydroxy-2-succinyl-cyclohex-3-ene-1-carboxylate + CO2. The protein operates within quinol/quinone metabolism; 1,4-dihydroxy-2-naphthoate biosynthesis; 1,4-dihydroxy-2-naphthoate from chorismate: step 2/7. Its pathway is quinol/quinone metabolism; menaquinone biosynthesis. Catalyzes the thiamine diphosphate-dependent decarboxylation of 2-oxoglutarate and the subsequent addition of the resulting succinic semialdehyde-thiamine pyrophosphate anion to isochorismate to yield 2-succinyl-5-enolpyruvyl-6-hydroxy-3-cyclohexene-1-carboxylate (SEPHCHC). The protein is 2-succinyl-5-enolpyruvyl-6-hydroxy-3-cyclohexene-1-carboxylate synthase of Salmonella paratyphi A (strain AKU_12601).